Here is a 330-residue protein sequence, read N- to C-terminus: Type II methyltransferase M.HaeIII (330 aa).

One can recognise an SAM-dependent MTase C5-type domain in the interval 1–327 (MNLISLFSGA…KTIKSALEIC (327 aa)). ATP contacts are provided by residues E29 and 50–51 (DI). C71 is a catalytic residue. N260 is a binding site for ATP.

The protein belongs to the class I-like SAM-binding methyltransferase superfamily. C5-methyltransferase family. As to quaternary structure, monomer.

The catalysed reaction is a 2'-deoxycytidine in DNA + S-adenosyl-L-methionine = a 5-methyl-2'-deoxycytidine in DNA + S-adenosyl-L-homocysteine + H(+). A methylase, recognizes the double-stranded sequence 5'-GGCC-3', methylates C-3 on both strands, and protects the DNA from cleavage by the HaeIII endonuclease. This is Type II methyltransferase M.HaeIII (haeIIIM) from Haemophilus aegyptius.